Here is a 439-residue protein sequence, read N- to C-terminus: DNA primase DnaG (439 aa).

Positions 169–243 constitute a Toprim domain; the sequence is DSIIVVEGRA…DIDYVARAPY (75 aa). Glu-175, Asp-217, and Asp-219 together coordinate Mg(2+).

This sequence belongs to the archaeal DnaG primase family. As to quaternary structure, forms a ternary complex with MCM helicase and DNA. Mg(2+) serves as cofactor.

It carries out the reaction ssDNA + n NTP = ssDNA/pppN(pN)n-1 hybrid + (n-1) diphosphate.. Its function is as follows. RNA polymerase that catalyzes the synthesis of short RNA molecules used as primers for DNA polymerase during DNA replication. This is DNA primase DnaG from Methanococcus maripaludis (strain C7 / ATCC BAA-1331).